The chain runs to 185 residues: MSRLKKRYLADVKPELQKKFAYKNLMQVPGLVKVVINMGIAEASKDKNSIQDCVKEMTMLSGQKPVITKAKKAISNFKLREDQPIGVKVTLRGQRMFDFIDRFVNIVCPRIRDFRGFPSKCDGMGNYTLGLDDQQIFPEINLDEVKRTQGMHITFVTSAKTDEECVELLRLLGIPFKNLPISVAA.

It belongs to the universal ribosomal protein uL5 family. In terms of assembly, part of the 50S ribosomal subunit; part of the 5S rRNA/L5/L18/L25 subcomplex. Contacts the 5S rRNA and the P site tRNA. Forms a bridge to the 30S subunit in the 70S ribosome.

Functionally, this is one of the proteins that bind and probably mediate the attachment of the 5S RNA into the large ribosomal subunit, where it forms part of the central protuberance. In the 70S ribosome it contacts protein S13 of the 30S subunit (bridge B1b), connecting the 2 subunits; this bridge is implicated in subunit movement. Contacts the P site tRNA; the 5S rRNA and some of its associated proteins might help stabilize positioning of ribosome-bound tRNAs. In Protochlamydia amoebophila (strain UWE25), this protein is Large ribosomal subunit protein uL5.